Reading from the N-terminus, the 74-residue chain is Omwaprin-b (74 aa).

The signal sequence occupies residues 1 to 24; it reads MSSGGLLLLLGLLTLWEVLTPVSS. The WAP domain occupies 27 to 71; sequence RPKKPGLCPPRPQKPCVKECKNDWSCPGQQKCCNYGCIDECRDPI. 4 cysteine pairs are disulfide-bonded: Cys-34–Cys-59, Cys-42–Cys-63, Cys-46–Cys-58, and Cys-52–Cys-67.

Belongs to the venom waprin family. In terms of tissue distribution, expressed by the venom gland.

Its subcellular location is the secreted. Functionally, damages membranes of susceptible bacteria. Has antibacterial activity against the Gram-positive bacteria B.megaterium and S.warneri. After 45 minutes of treatment with this protein, B.megaterium have no visible pili and are smooth. Has no antibacterial activity against the Gram-positive bacteria B.thuringiensis, S.aureus, S.clavuligerus and B. anthracis, or the Gram-negative bacteria E.coli and A.tumefaciens. Has no hemolytic activity. Does not inhibit the proteinases elastase and cathepsin G. Is not toxic to mice. The polypeptide is Omwaprin-b (Oxyuranus microlepidotus (Inland taipan)).